A 69-amino-acid chain; its full sequence is MKASELRNKTVEELNNELIELRRAQFSLRMQLATQQLNKVDQVGKVRRDIARVRSVLAEKAKAANASQA.

Belongs to the universal ribosomal protein uL29 family.

The chain is Large ribosomal subunit protein uL29 from Methylobacillus flagellatus (strain ATCC 51484 / DSM 6875 / VKM B-1610 / KT).